The sequence spans 273 residues: Putative phosphoenolpyruvate synthase regulatory protein (273 aa).

Residue 153-160 (AVSRAGKT) participates in ADP binding.

The protein belongs to the pyruvate, phosphate/water dikinase regulatory protein family. PSRP subfamily.

It catalyses the reaction [pyruvate, water dikinase] + ADP = [pyruvate, water dikinase]-phosphate + AMP + H(+). The enzyme catalyses [pyruvate, water dikinase]-phosphate + phosphate + H(+) = [pyruvate, water dikinase] + diphosphate. In terms of biological role, bifunctional serine/threonine kinase and phosphorylase involved in the regulation of the phosphoenolpyruvate synthase (PEPS) by catalyzing its phosphorylation/dephosphorylation. The chain is Putative phosphoenolpyruvate synthase regulatory protein from Xylella fastidiosa (strain 9a5c).